Here is a 203-residue protein sequence, read N- to C-terminus: Shikimate kinase (203 aa).

Residue 38-43 participates in ATP binding; that stretch reads GAGKST. S42 lines the Mg(2+) pocket. The substrate site is built by D60, R84, and G106. Residue R144 participates in ATP binding. Residue R163 participates in substrate binding.

This sequence belongs to the shikimate kinase family. As to quaternary structure, monomer. Mg(2+) serves as cofactor.

Its subcellular location is the cytoplasm. The enzyme catalyses shikimate + ATP = 3-phosphoshikimate + ADP + H(+). It participates in metabolic intermediate biosynthesis; chorismate biosynthesis; chorismate from D-erythrose 4-phosphate and phosphoenolpyruvate: step 5/7. Its function is as follows. Catalyzes the specific phosphorylation of the 3-hydroxyl group of shikimic acid using ATP as a cosubstrate. In Rhodopseudomonas palustris (strain ATCC BAA-98 / CGA009), this protein is Shikimate kinase.